The chain runs to 61 residues: Cecropin-D (61 aa).

The first 22 residues, 1–22 (MKFSKIFVFVFAIVFATASVSA), serve as a signal peptide directing secretion. A propeptide spans 23 to 24 (AP) (removed by a dipeptidylpeptidase). Position 60 is a glutamine amide (Gln-60).

Belongs to the cecropin family. In terms of tissue distribution, mainly in fat body. Lower in hemocytes. Not expressed in midguts, malpighian tubules and silk glands.

It localises to the secreted. Functionally, cecropins have lytic and antibacterial activity against several Gram-positive and Gram-negative bacteria. In Bombyx mori (Silk moth), this protein is Cecropin-D (CECD).